Reading from the N-terminus, the 709-residue chain is Eukaryotic translation initiation factor 3 subunit B (709 aa).

The sufficient for interaction with HCR1 and TIF32 stretch occupies residues 1 to 98; sequence MSINEEEYLR…LFIQYKNVAD (98 aa). Residues 1 to 221 form a sufficient for interaction with PIC8 region; that stretch reads MSINEEEYLR…GIQAWGGADF (221 aa). Residues 37–124 form the RRM domain; it reads NYVIVDGAPI…HRLLVNRLSD (88 aa).

It belongs to the eIF-3 subunit B family. As to quaternary structure, component of the eukaryotic translation initiation factor 3 (eIF-3) complex.

Its subcellular location is the cytoplasm. Its function is as follows. RNA-binding component of the eukaryotic translation initiation factor 3 (eIF-3) complex, which is involved in protein synthesis of a specialized repertoire of mRNAs and, together with other initiation factors, stimulates binding of mRNA and methionyl-tRNAi to the 40S ribosome. The eIF-3 complex specifically targets and initiates translation of a subset of mRNAs involved in cell proliferation. The sequence is that of Eukaryotic translation initiation factor 3 subunit B from Lodderomyces elongisporus (strain ATCC 11503 / CBS 2605 / JCM 1781 / NBRC 1676 / NRRL YB-4239) (Yeast).